Consider the following 339-residue polypeptide: D-erythrose-4-phosphate dehydrogenase (339 aa).

NAD(+)-binding positions include Arg12–Ile13 and Arg81. Substrate contacts are provided by residues Ser154–Thr156, Arg200, Thr213–Lys214, and Arg236. Catalysis depends on Cys155, which acts as the Nucleophile. Asn318 is an NAD(+) binding site.

This sequence belongs to the glyceraldehyde-3-phosphate dehydrogenase family. Epd subfamily. Homotetramer.

It is found in the cytoplasm. The catalysed reaction is D-erythrose 4-phosphate + NAD(+) + H2O = 4-phospho-D-erythronate + NADH + 2 H(+). It functions in the pathway cofactor biosynthesis; pyridoxine 5'-phosphate biosynthesis; pyridoxine 5'-phosphate from D-erythrose 4-phosphate: step 1/5. Its function is as follows. Catalyzes the NAD-dependent conversion of D-erythrose 4-phosphate to 4-phosphoerythronate. The sequence is that of D-erythrose-4-phosphate dehydrogenase from Escherichia coli O45:K1 (strain S88 / ExPEC).